A 227-amino-acid polypeptide reads, in one-letter code: UPF0659 protein YMR090W (227 aa).

Belongs to the UPF0659 family.

It is found in the cytoplasm. In Saccharomyces cerevisiae (strain ATCC 204508 / S288c) (Baker's yeast), this protein is UPF0659 protein YMR090W.